We begin with the raw amino-acid sequence, 338 residues long: Holliday junction branch migration complex subunit RuvB (338 aa).

A large ATPase domain (RuvB-L) region spans residues 4 to 187; sequence ADKDRLVSGD…FGISEHMAYY (184 aa). ATP is bound by residues leucine 26, arginine 27, glycine 68, lysine 71, threonine 72, threonine 73, 134–136, arginine 177, tyrosine 187, and arginine 224; that span reads EDF. Position 72 (threonine 72) interacts with Mg(2+). A small ATPAse domain (RuvB-S) region spans residues 188–258; sequence SADDLSEIVK…MVDHALDQLQ (71 aa). A head domain (RuvB-H) region spans residues 261–338; sequence QQGLDQIDRK…AHMGMSAEQH (78 aa). DNA contacts are provided by arginine 316 and arginine 321.

It belongs to the RuvB family. Homohexamer. Forms an RuvA(8)-RuvB(12)-Holliday junction (HJ) complex. HJ DNA is sandwiched between 2 RuvA tetramers; dsDNA enters through RuvA and exits via RuvB. An RuvB hexamer assembles on each DNA strand where it exits the tetramer. Each RuvB hexamer is contacted by two RuvA subunits (via domain III) on 2 adjacent RuvB subunits; this complex drives branch migration. In the full resolvosome a probable DNA-RuvA(4)-RuvB(12)-RuvC(2) complex forms which resolves the HJ.

Its subcellular location is the cytoplasm. It carries out the reaction ATP + H2O = ADP + phosphate + H(+). Its function is as follows. The RuvA-RuvB-RuvC complex processes Holliday junction (HJ) DNA during genetic recombination and DNA repair, while the RuvA-RuvB complex plays an important role in the rescue of blocked DNA replication forks via replication fork reversal (RFR). RuvA specifically binds to HJ cruciform DNA, conferring on it an open structure. The RuvB hexamer acts as an ATP-dependent pump, pulling dsDNA into and through the RuvAB complex. RuvB forms 2 homohexamers on either side of HJ DNA bound by 1 or 2 RuvA tetramers; 4 subunits per hexamer contact DNA at a time. Coordinated motions by a converter formed by DNA-disengaged RuvB subunits stimulates ATP hydrolysis and nucleotide exchange. Immobilization of the converter enables RuvB to convert the ATP-contained energy into a lever motion, pulling 2 nucleotides of DNA out of the RuvA tetramer per ATP hydrolyzed, thus driving DNA branch migration. The RuvB motors rotate together with the DNA substrate, which together with the progressing nucleotide cycle form the mechanistic basis for DNA recombination by continuous HJ branch migration. Branch migration allows RuvC to scan DNA until it finds its consensus sequence, where it cleaves and resolves cruciform DNA. The sequence is that of Holliday junction branch migration complex subunit RuvB from Lacticaseibacillus paracasei (strain ATCC 334 / BCRC 17002 / CCUG 31169 / CIP 107868 / KCTC 3260 / NRRL B-441) (Lactobacillus paracasei).